The primary structure comprises 1143 residues: MVQRISLKNKLLPDLVEIQRASFKWFLLEGLTEVLEIFPKISDPTSRLELQLFGNEYKIKFPRYSVRQAKNRDKTYSAQIYVPAKLTRKDIDLPSKNQEKNIKSLDLSSTHLQLSAEKQIKNKKYKKRLVFIGDLPIMTNRGTFIVSGTERVIINQIIRSPGIYYKQEIDKNGKQIYSASLISNRGSWLKFEIDPKGEIWIRIDKTHKVNAYIFLRAIGLNKDEIEKGLSKYAFLISASQIYSVKELAKEIGKNNIEEVTDEEALLIVYSKLRPNEPATVAVAKQMLYSRFFDPKRYDLGEVGRYKINKKLGLNIPKTFRVLSPQDILSSIDYLINIKDKNSGNLDDIDHLGNRRVRSVGELLQNQFRVGLNRLERIIRERMMICDIDSLSLSNLINPKPLIASVREFFGSSQLSQFMDQTNPVAELTHKRRISALGPGGFNKDRAGFAVRDLHPSHYGRICPIETPEGPNAGLIGSLATCARVNVFGFIETPFYPVNQGQVIYHNSPVYLTADEEDDFRVAPGDVKVSKQHYIEGDIIPVRYRQEFITTTPTQVDYIAISPIQVISAATSLIPFLEHDDANRALMGSNMQRQAVPLLYPEKPIIGTGLETKIARDSGMVVISRTSGHVNYVSANKIGIQDNSGRTVHYRLKKYYRSNQDTCINQRPIVWVGEKIVVGQTLADGASTDGGEIALGRNILVAYMPWEGYNYEDAFLISERLVYDDLYTSIHIEKYEVECRQTKLGPEEITREIPNVSDNSLKDLDRNGIVVGGSWVEAGDILVGKITPKGEADQLPEGKLLRAIFGEKARDVRDTSLRLPNAAKGRVVKVRVFTRQKGDELPPGTNAMIRVYVAQKRKIQVGDKMAGRHGNKGIISRILPKQDMPYLSDGTPVDIVLNPLGVPSRMNVGQVFECLLGLAGGYLGKRFKIIPFDEMYGAEASRALVNRKLKEASLITSNKWLFNDQHPGKMQVFDGRTGEPFDNPVTVGRAYMLKLVHLVDDKIHARSTGPYSLVTQQPLGGRAQHGGQRLGEMEVWALEAFGAAYTLQELLTVKSDDMQARNEALNAIVKGKPIPKPGTPESFKVLMRELQSLGLDIAVHKLKLFEDGQRRTVEVDLMSDSKDNRVDRSNYDTPPVDDFEQFLY.

The protein belongs to the RNA polymerase beta chain family. As to quaternary structure, in plastids the minimal PEP RNA polymerase catalytic core is composed of four subunits: alpha, beta, beta', and beta''. When a (nuclear-encoded) sigma factor is associated with the core the holoenzyme is formed, which can initiate transcription.

It is found in the plastid. The protein resides in the chloroplast. The enzyme catalyses RNA(n) + a ribonucleoside 5'-triphosphate = RNA(n+1) + diphosphate. In terms of biological role, DNA-dependent RNA polymerase catalyzes the transcription of DNA into RNA using the four ribonucleoside triphosphates as substrates. In Pyropia yezoensis (Susabi-nori), this protein is DNA-directed RNA polymerase subunit beta.